A 170-amino-acid chain; its full sequence is Cytochrome P450 monooxygenase oryQ (170 aa).

C85 is a heme binding site.

This sequence belongs to the cytochrome P450 family. The cofactor is heme.

It participates in secondary metabolite biosynthesis. Cytochrome P450 monooxygenase; part of the gene cluster that mediates the biosynthesis of oryzines, natural products with an unusual maleidride backbone. The two subunits of the fungal fatty acid synthase oryfasA and oryfasB probably form octenoic acid. This fatty acid is most likely activated by the acyl-CoA ligase oryP to give octenyl-CoA before the citrate synthase-like protein oryE catalyzes condensation with oxaloacetate to form tricarboxylic acid. The next steps of the pathways are conjectural, but a favorite possible route has been proposed, beginning with decarboxylation and concomitant dehydration by the decarboxylase oryM, followed by tautomerization, which may lead to the production of a diene intermediate. Reduction of this diene intermediate could give the known metabolite piliformic acid. On the pathway to oryzine B and oryzine A, however, hydroxylation of the diene by the alpha-ketoglutarate-dependent dioxygenase oryG and lactonisation by the lactonohydrolases oryH or oryL could give oryzine B directly. Finally, enoyl reduction by the dehydrogenase oryD would then convert oryzine B into oryzine A. This Aspergillus oryzae (strain ATCC 42149 / RIB 40) (Yellow koji mold) protein is Cytochrome P450 monooxygenase oryQ.